The primary structure comprises 100 residues: MPFLVALSGIISGVRDHSMTVRLDQQTRQRLQDIVKGGYRSANAAIVDAINKRWEALHDEQLDAAYAAAIHDNPAYPYESEAERSAARARRNARQQRSAQ.

Positions 77–100 (PYESEAERSAARARRNARQQRSAQ) are disordered.

In terms of assembly, forms a complex with cognate toxin MazF1.

Probable antitoxin component of a type II toxin-antitoxin (TA) system. Labile antitoxin that binds to cognate MazF1 toxin and counteracts its endoribonuclease activity. In Mycobacterium bovis (strain ATCC BAA-935 / AF2122/97), this protein is Probable antitoxin MazE1 (mazE1).